The following is a 60-amino-acid chain: U-scutigerotoxin(02)-Tl4a (60 aa).

Belongs to the scutigerotoxin-02 family. In terms of processing, contains 3 disulfide bonds. In terms of tissue distribution, expressed by the venom gland.

Its subcellular location is the secreted. The polypeptide is U-scutigerotoxin(02)-Tl4a (Thereuopoda longicornis (Long-legged centipede)).